The primary structure comprises 392 residues: Obg-like ATPase 1 (392 aa).

The 265-residue stretch at 21–285 (LKTGIVGMPN…FTEEEAIEEC (265 aa)) folds into the OBG-type G domain. 30 to 35 (NVGKST) is a binding site for ATP. Positions 34 and 55 each coordinate Mg(2+). Met-233 contacts ATP. The TGS domain maps to 306-389 (NLINYFTCGE…ESGDIAHWKA (84 aa)).

The protein belongs to the TRAFAC class OBG-HflX-like GTPase superfamily. OBG GTPase family. YchF/OLA1 subfamily. As to quaternary structure, monomer. Requires Mg(2+) as cofactor.

It is found in the cytoplasm. It localises to the nucleus. Hydrolyzes ATP, and can also hydrolyze GTP with lower efficiency. Has lower affinity for GTP. Negatively regulates the G2/M transition in the cell cycle. The sequence is that of Obg-like ATPase 1 from Schizosaccharomyces pombe (strain 972 / ATCC 24843) (Fission yeast).